Reading from the N-terminus, the 147-residue chain is MQRTYEVMFIVRPDLTDEDLDKLVSTLETQVGTAGGTIKSVDKMGKRRLAYEVSTFTDGMYILFTIEGEGALIKEVERRLRVQEQVIKFITVRVDEEQKRLAKVKAIRDTKVRGKGTRAAEQAAAAEAAAPAAAPAEPASAEPAPAV.

The interval 114–147 (GKGTRAAEQAAAAEAAAPAAAPAEPASAEPAPAV) is disordered. Residues 119–147 (AAEQAAAAEAAAPAAAPAEPASAEPAPAV) show a composition bias toward low complexity.

The protein belongs to the bacterial ribosomal protein bS6 family.

In terms of biological role, binds together with bS18 to 16S ribosomal RNA. The chain is Small ribosomal subunit protein bS6 from Koribacter versatilis (strain Ellin345).